Consider the following 414-residue polypeptide: 2,3-diketo-5-methylthiopentyl-1-phosphate enolase (414 aa).

Lysine 99 acts as the Proton acceptor in catalysis. Substrate-binding positions include lysine 148, 174–177 (KDDE), histidine 265, glycine 338, and 360–361 (GG). Mg(2+) is bound by residues lysine 174, aspartate 176, and glutamate 177. Lysine 174 is modified (N6-carboxylysine).

It belongs to the RuBisCO large chain family. Type IV subfamily. Homodimer. It depends on Mg(2+) as a cofactor.

The catalysed reaction is 5-methylsulfanyl-2,3-dioxopentyl phosphate = 2-hydroxy-5-methylsulfanyl-3-oxopent-1-enyl phosphate. It participates in amino-acid biosynthesis; L-methionine biosynthesis via salvage pathway; L-methionine from S-methyl-5-thio-alpha-D-ribose 1-phosphate: step 3/6. Catalyzes the enolization of 2,3-diketo-5-methylthiopentyl-1-phosphate (DK-MTP-1-P) into 2-hydroxy-3-keto-5-methylthiopentenyl-1-phosphate (HK-MTPenyl-1-P). The polypeptide is 2,3-diketo-5-methylthiopentyl-1-phosphate enolase (Bacillus cytotoxicus (strain DSM 22905 / CIP 110041 / 391-98 / NVH 391-98)).